We begin with the raw amino-acid sequence, 275 residues long: tRNA pseudouridine synthase A (275 aa).

The Nucleophile role is filled by D56. Y109 contributes to the substrate binding site.

Belongs to the tRNA pseudouridine synthase TruA family.

The enzyme catalyses uridine(38/39/40) in tRNA = pseudouridine(38/39/40) in tRNA. Its function is as follows. Formation of pseudouridine at positions 38, 39 and 40 in the anticodon stem and loop of transfer RNAs. The polypeptide is tRNA pseudouridine synthase A (Methanothermobacter thermautotrophicus (strain ATCC 29096 / DSM 1053 / JCM 10044 / NBRC 100330 / Delta H) (Methanobacterium thermoautotrophicum)).